The chain runs to 237 residues: Ubiquinone biosynthesis O-methyltransferase (237 aa).

S-adenosyl-L-methionine is bound by residues arginine 39, glycine 59, aspartate 80, and methionine 124.

Belongs to the methyltransferase superfamily. UbiG/COQ3 family.

It carries out the reaction a 3-demethylubiquinol + S-adenosyl-L-methionine = a ubiquinol + S-adenosyl-L-homocysteine + H(+). The enzyme catalyses a 3-(all-trans-polyprenyl)benzene-1,2-diol + S-adenosyl-L-methionine = a 2-methoxy-6-(all-trans-polyprenyl)phenol + S-adenosyl-L-homocysteine + H(+). Its pathway is cofactor biosynthesis; ubiquinone biosynthesis. O-methyltransferase that catalyzes the 2 O-methylation steps in the ubiquinone biosynthetic pathway. This Vibrio atlanticus (strain LGP32) (Vibrio splendidus (strain Mel32)) protein is Ubiquinone biosynthesis O-methyltransferase.